Consider the following 315-residue polypeptide: Protoheme IX farnesyltransferase (315 aa).

The next 9 helical transmembrane spans lie at 34-54 (VISLVVFTGAAGLAMAPGPIN), 55-75 (PLIAAVSILCICMASGAAGAI), 105-125 (ALGFGIGLSVASVLLMWLAAN), 127-147 (LAAFILAFSIFFYAVIYTMWL), 155-175 (IVIGGAAGAFPPMIGWAATTG), 177-197 (LGVLPVVMFAIVFLWTPPHFW), 226-246 (WQILFYTLILSAVSLVPSFLH), 251-271 (LYTGVASLLDAGFVACAVGVL), and 294-314 (YSLAYLFLLFCGLLADHFLIM).

Belongs to the UbiA prenyltransferase family. Protoheme IX farnesyltransferase subfamily.

The protein localises to the cell inner membrane. It catalyses the reaction heme b + (2E,6E)-farnesyl diphosphate + H2O = Fe(II)-heme o + diphosphate. Its pathway is porphyrin-containing compound metabolism; heme O biosynthesis; heme O from protoheme: step 1/1. In terms of biological role, converts heme B (protoheme IX) to heme O by substitution of the vinyl group on carbon 2 of heme B porphyrin ring with a hydroxyethyl farnesyl side group. This chain is Protoheme IX farnesyltransferase, found in Gluconacetobacter diazotrophicus (strain ATCC 49037 / DSM 5601 / CCUG 37298 / CIP 103539 / LMG 7603 / PAl5).